The primary structure comprises 308 residues: Probable GTP 3',8-cyclase (308 aa).

The Radical SAM core domain occupies 4 to 222 (RFGRPLEDLR…KKLIRKKHFR (219 aa)). Arginine 13 provides a ligand contact to GTP. Cysteine 20, cysteine 24, and cysteine 27 together coordinate [4Fe-4S] cluster. Lysine 60 lines the GTP pocket. S-adenosyl-L-methionine is bound at residue glycine 64. Threonine 90 contacts GTP. Serine 114 is a binding site for S-adenosyl-L-methionine. Residue lysine 151 coordinates GTP. Positions 245 and 248 each coordinate [4Fe-4S] cluster. A GTP-binding site is contributed by 250–252 (RIR). Cysteine 262 lines the [4Fe-4S] cluster pocket.

It belongs to the radical SAM superfamily. MoaA family. Requires [4Fe-4S] cluster as cofactor.

The enzyme catalyses GTP + AH2 + S-adenosyl-L-methionine = (8S)-3',8-cyclo-7,8-dihydroguanosine 5'-triphosphate + 5'-deoxyadenosine + L-methionine + A + H(+). The protein operates within cofactor biosynthesis; molybdopterin biosynthesis. In terms of biological role, catalyzes the cyclization of GTP to (8S)-3',8-cyclo-7,8-dihydroguanosine 5'-triphosphate. This is Probable GTP 3',8-cyclase from Saccharolobus solfataricus (strain ATCC 35092 / DSM 1617 / JCM 11322 / P2) (Sulfolobus solfataricus).